A 447-amino-acid chain; its full sequence is Tubulin beta-5 chain (447 aa).

Positions 11, 69, 138, 142, 143, 144, 204, and 226 each coordinate GTP. Glutamate 69 contacts Mg(2+). Residues 421–447 (EYQQYQDATADDEEEDYGDEEEDEVAA) are disordered. Acidic residues predominate over residues 429 to 447 (TADDEEEDYGDEEEDEVAA).

This sequence belongs to the tubulin family. As to quaternary structure, dimer of alpha and beta chains. A typical microtubule is a hollow water-filled tube with an outer diameter of 25 nm and an inner diameter of 15 nM. Alpha-beta heterodimers associate head-to-tail to form protofilaments running lengthwise along the microtubule wall with the beta-tubulin subunit facing the microtubule plus end conferring a structural polarity. Microtubules usually have 13 protofilaments but different protofilament numbers can be found in some organisms and specialized cells. Requires Mg(2+) as cofactor. As to expression, expressed in roots, leaf sheaths, and suspension cultured cells.

The protein resides in the cytoplasm. The protein localises to the cytoskeleton. In terms of biological role, tubulin is the major constituent of microtubules, a cylinder consisting of laterally associated linear protofilaments composed of alpha- and beta-tubulin heterodimers. Microtubules grow by the addition of GTP-tubulin dimers to the microtubule end, where a stabilizing cap forms. Below the cap, tubulin dimers are in GDP-bound state, owing to GTPase activity of alpha-tubulin. This chain is Tubulin beta-5 chain (TUBB5), found in Oryza sativa subsp. japonica (Rice).